A 135-amino-acid chain; its full sequence is Ig heavy chain V region XIG14 (135 aa).

The N-terminal stretch at 1–18 (DFIIFFIFMFFSPSCILS) is a signal peptide. In terms of domain architecture, Ig-like spans 20-128 (TLQESGPGTV…GYNFDYWGQG (109 aa)).

The protein is Ig heavy chain V region XIG14 of Xenopus laevis (African clawed frog).